The chain runs to 149 residues: 3-hydroxyacyl-[acyl-carrier-protein] dehydratase FabZ (149 aa).

His-49 is a catalytic residue.

Belongs to the thioester dehydratase family. FabZ subfamily.

Its subcellular location is the cytoplasm. It carries out the reaction a (3R)-hydroxyacyl-[ACP] = a (2E)-enoyl-[ACP] + H2O. Its function is as follows. Involved in unsaturated fatty acids biosynthesis. Catalyzes the dehydration of short chain beta-hydroxyacyl-ACPs and long chain saturated and unsaturated beta-hydroxyacyl-ACPs. This is 3-hydroxyacyl-[acyl-carrier-protein] dehydratase FabZ from Sulfurimonas denitrificans (strain ATCC 33889 / DSM 1251) (Thiomicrospira denitrificans (strain ATCC 33889 / DSM 1251)).